Here is a 311-residue protein sequence, read N- to C-terminus: Geranylgeranyl transferase type-2 subunit beta (311 aa).

PFTB repeat units lie at residues 54–95 (KERI…AMLD), 102–143 (KDKV…AILG), 150–191 (KNTA…KILN), 197–239 (DEEL…AIIG), and 246–288 (RNQL…SLLQ). Residues 176–178 (HGA) and 218–230 (RPEK…YGWW) each bind geranylgeranyl diphosphate. Positions 224, 226, and 276 each coordinate Zn(2+).

It belongs to the protein prenyltransferase subunit beta family. In terms of assembly, heterodimer of an alpha and a beta subunit. It depends on Zn(2+) as a cofactor.

It catalyses the reaction geranylgeranyl diphosphate + L-cysteinyl-[protein] = S-geranylgeranyl-L-cysteinyl-[protein] + diphosphate. Catalyzes the transfer of a geranyl-geranyl moiety from geranyl-geranyl pyrophosphate to proteins having the C-terminal -XCC or -XCXC, where both cysteines may become modified. This is Geranylgeranyl transferase type-2 subunit beta (ptb1) from Schizosaccharomyces pombe (strain 972 / ATCC 24843) (Fission yeast).